The following is a 123-amino-acid chain: Large ribosomal subunit protein bL12 (123 aa).

This sequence belongs to the bacterial ribosomal protein bL12 family. Homodimer. Part of the ribosomal stalk of the 50S ribosomal subunit. Forms a multimeric L10(L12)X complex, where L10 forms an elongated spine to which 2 to 4 L12 dimers bind in a sequential fashion. Binds GTP-bound translation factors.

Functionally, forms part of the ribosomal stalk which helps the ribosome interact with GTP-bound translation factors. Is thus essential for accurate translation. The chain is Large ribosomal subunit protein bL12 from Neisseria gonorrhoeae (strain NCCP11945).